Reading from the N-terminus, the 450-residue chain is Phosphoglucosamine mutase (450 aa).

Ser101 serves as the catalytic Phosphoserine intermediate. Ser101, Asp242, Asp244, and Asp246 together coordinate Mg(2+). Phosphoserine is present on Ser101.

It belongs to the phosphohexose mutase family. The cofactor is Mg(2+). Post-translationally, activated by phosphorylation.

The catalysed reaction is alpha-D-glucosamine 1-phosphate = D-glucosamine 6-phosphate. Its function is as follows. Catalyzes the conversion of glucosamine-6-phosphate to glucosamine-1-phosphate. The protein is Phosphoglucosamine mutase of Rhodopseudomonas palustris (strain ATCC BAA-98 / CGA009).